A 294-amino-acid chain; its full sequence is Phosphatidylserine decarboxylase proenzyme (294 aa).

Catalysis depends on charge relay system; for autoendoproteolytic cleavage activity residues aspartate 100, histidine 157, and serine 261. The active-site Schiff-base intermediate with substrate; via pyruvic acid; for decarboxylase activity is the serine 261. Residue serine 261 is modified to Pyruvic acid (Ser); by autocatalysis.

The protein belongs to the phosphatidylserine decarboxylase family. PSD-B subfamily. Prokaryotic type I sub-subfamily. As to quaternary structure, heterodimer of a large membrane-associated beta subunit and a small pyruvoyl-containing alpha subunit. It depends on pyruvate as a cofactor. In terms of processing, is synthesized initially as an inactive proenzyme. Formation of the active enzyme involves a self-maturation process in which the active site pyruvoyl group is generated from an internal serine residue via an autocatalytic post-translational modification. Two non-identical subunits are generated from the proenzyme in this reaction, and the pyruvate is formed at the N-terminus of the alpha chain, which is derived from the carboxyl end of the proenzyme. The autoendoproteolytic cleavage occurs by a canonical serine protease mechanism, in which the side chain hydroxyl group of the serine supplies its oxygen atom to form the C-terminus of the beta chain, while the remainder of the serine residue undergoes an oxidative deamination to produce ammonia and the pyruvoyl prosthetic group on the alpha chain. During this reaction, the Ser that is part of the protease active site of the proenzyme becomes the pyruvoyl prosthetic group, which constitutes an essential element of the active site of the mature decarboxylase.

It localises to the cell membrane. It catalyses the reaction a 1,2-diacyl-sn-glycero-3-phospho-L-serine + H(+) = a 1,2-diacyl-sn-glycero-3-phosphoethanolamine + CO2. It participates in phospholipid metabolism; phosphatidylethanolamine biosynthesis; phosphatidylethanolamine from CDP-diacylglycerol: step 2/2. Its function is as follows. Catalyzes the formation of phosphatidylethanolamine (PtdEtn) from phosphatidylserine (PtdSer). The sequence is that of Phosphatidylserine decarboxylase proenzyme from Histophilus somni (strain 129Pt) (Haemophilus somnus).